A 318-amino-acid chain; its full sequence is Polyprenal reductase (318 aa).

The Cytoplasmic portion of the chain corresponds to 1-11 (MAPWAEAEHSA). The helical transmembrane segment at 12 to 34 (LNPLRAVWLTLTAAFLLTLLLQL) threads the bilayer. Over 35 to 80 (LPPGLLPGCAIFQDLIRYGKTKCGEPSRPAACRAFDVPKRYFSHFY) the chain is Lumenal. Residues 81–101 (IISVLWNGFLLWCLTQSLFLG) traverse the membrane as a helical segment. Over 102 to 117 (APFPSWLHGLLRILGA) the chain is Cytoplasmic. The helical transmembrane segment at 118-138 (AQFQGGELALSAFLVLVFLWL) threads the bilayer. Residues 139–157 (HSLRRLFECLYVSVFSNVM) are Lumenal-facing. The chain crosses the membrane as a helical span at residues 158–178 (IHVVQYCFGLVYYVLVGLTVL). Residues 179-194 (SQVPMDGRNAYITGKN) lie on the Cytoplasmic side of the membrane. A helical membrane pass occupies residues 195 to 215 (LLMQARWFHILGMMMFIWSSA). Residues 216–260 (HQYKCHVILGNLRKNKAGVVIHCNHRIPFGDWFEYVSSPNYLAEL) are Lumenal-facing. The chain crosses the membrane as a helical span at residues 261–281 (MIYVSMAVTFGFHNLTWWLVV). The Cytoplasmic portion of the chain corresponds to 282–318 (TNVFFNQALSAFLSHQFYKSKFVSYPKHRKAFLPFLF).

Belongs to the steroid 5-alpha reductase family. Polyprenal reductase subfamily. As to expression, expressed in preadipocytes (at protein level). Overexpressed in hormone-refractory prostate cancers (HRPC). Almost no or little expression in normal adult organs.

The protein localises to the endoplasmic reticulum membrane. It catalyses the reaction a di-trans,poly-cis-dolichal + NADP(+) = a di-trans,poly-cis-polyprenal + NADPH + H(+). The catalysed reaction is a 3-oxo-5alpha-steroid + NADP(+) = a 3-oxo-Delta(4)-steroid + NADPH + H(+). The enzyme catalyses androst-4-ene-3,17-dione + NADPH + H(+) = 5alpha-androstan-3,17-dione + NADP(+). It carries out the reaction 17beta-hydroxy-5alpha-androstan-3-one + NADP(+) = testosterone + NADPH + H(+). It participates in protein modification; protein glycosylation. In terms of biological role, plays a key role in early steps of protein N-linked glycosylation by being involved in the conversion of polyprenol into dolichol. Acts as a polyprenal reductase that mediates the reduction of polyprenal into dolichal in a NADP-dependent mechanism. Dolichols are required for the synthesis of dolichol-linked monosaccharides and the oligosaccharide precursor used for N-glycosylation. Also able to convert testosterone (T) into 5-alpha-dihydrotestosterone (DHT). In Homo sapiens (Human), this protein is Polyprenal reductase.